The primary structure comprises 327 residues: Glycerol-3-phosphate dehydrogenase [NAD(P)+] (327 aa).

3 residues coordinate NADPH: Trp13, His33, and Lys102. Sn-glycerol 3-phosphate-binding residues include Lys102, Gly130, and Ser132. Ala134 is a binding site for NADPH. Sn-glycerol 3-phosphate-binding residues include Lys185, Asp238, Ser248, Arg249, and Asn250. Lys185 functions as the Proton acceptor in the catalytic mechanism. Position 249 (Arg249) interacts with NADPH. Glu275 lines the NADPH pocket.

The protein belongs to the NAD-dependent glycerol-3-phosphate dehydrogenase family.

It localises to the cytoplasm. It carries out the reaction sn-glycerol 3-phosphate + NAD(+) = dihydroxyacetone phosphate + NADH + H(+). The enzyme catalyses sn-glycerol 3-phosphate + NADP(+) = dihydroxyacetone phosphate + NADPH + H(+). It participates in membrane lipid metabolism; glycerophospholipid metabolism. In terms of biological role, catalyzes the reduction of the glycolytic intermediate dihydroxyacetone phosphate (DHAP) to sn-glycerol 3-phosphate (G3P), the key precursor for phospholipid synthesis. The chain is Glycerol-3-phosphate dehydrogenase [NAD(P)+] from Vesicomyosocius okutanii subsp. Calyptogena okutanii (strain HA).